The chain runs to 575 residues: MKLIEHYVALVKTGCAEYGQMNEMTLTEIADCLFCTERNAKLILHKLENSNWIIRESGAGRGRKSKIAFLRRPEELLLQTAKEYTMSGKLKKAKELLQQYQSAFPGLQNEYNMWLSEVFGFVTETGENGAKDVLRLFITPESVSSLDPCQIFLRSEGHFVKQIFDTLFTFDSDMQEPKPHLVHGWEEVGKKQWRFFLRKGVLFHNGQPLTSRDVAFTFQRFLELADNPYKWLLHGVKQVLEKGPYCVELILDKPNALLPYALCDERLSILPAEQGGGKNGTGPFQMNQQHSGMLVLEANERYFKGRPYLDRVEFVFSEQAGEMNGFTIQEKQTCPEQQTVFDERHVQYLSLNLKKKGPLQHRSFRKALRLLISSERLVREAGGHRRIPVTSFLHPSPFEWEGVSPSELLKKSGYEGETIVLYTFSETDHREDAEWIQNICAQHGIRLTLQFCDAADLRRPEIVQMADIIHDSATFYQDSEFGFLHLLLSENSFLYQHLSEKLTQICSGMTERMFSMPDRCSRINILRDIDRQMIQELNAIPLYQNVLQVTSSKNVKGLVLDEEGWIDLYSVWLSK.

The region spanning 1–120 (MKLIEHYVAL…YNMWLSEVFG (120 aa)) is the HTH marR-type domain. The H-T-H motif DNA-binding region spans 26 to 49 (LTEIADCLFCTERNAKLILHKLEN). The solute-binding region stretch occupies residues 176-490 (EPKPHLVHGW…FGFLHLLLSE (315 aa)).

It in the C-terminal section; belongs to the bacterial solute-binding protein 5 family.

This is an uncharacterized protein from Bacillus subtilis (strain 168).